Consider the following 670-residue polypeptide: Zinc finger protein 526 (670 aa).

C2H2-type zinc fingers lie at residues 57-79 (FMCS…QEQH), 108-130 (FQCG…QDAH), and 140-163 (YQCW…KAQH). Disordered stretches follow at residues 168–196 (VAEP…KMEP) and 217–304 (GTHF…ATHP). Residues 171-189 (PPVPPPLPPPTPLPPPSPP) show a composition bias toward pro residues. A C2H2-type 4 zinc finger spans residues 197 to 219 (YECPECSTLCATPEEFLEHQGTH). The segment covering 217–231 (GTHFDSLEKEERNGL) has biased composition (basic and acidic residues). Positions 232 to 263 (EEEEEDDEEDEEDDEEMEDEEAMAEVGDDAVG) are enriched in acidic residues. 9 C2H2-type zinc fingers span residues 305 to 327 (FHCS…GRAH), 332 to 354 (HECT…LRLH), 360 to 382 (YLCV…RRAH), 388 to 409 (HRCR…RRTH), 442 to 465 (LPCP…RAVH), 472 to 494 (HRCG…LRTH), 500 to 522 (FQCH…QLTH), 528 to 550 (YQCL…RRLH), and 573 to 595 (YYCG…QRVH). The interval 409-443 (HAGKSGAPPTGATAPPAPAEPTPPPPPPAPPAQLP) is disordered. A compositionally biased stretch (pro residues) spans 423-442 (PPAPAEPTPPPPPPAPPAQL). The interval 601–621 (LTLQPPRSPSPAPPPPPEPQQ) is disordered. Over residues 606–619 (PRSPSPAPPPPPEP) the composition is skewed to pro residues.

Belongs to the krueppel C2H2-type zinc-finger protein family. As to expression, widely expressed.

It is found in the nucleus. Functionally, may be involved in transcriptional regulation. The polypeptide is Zinc finger protein 526 (ZNF526) (Homo sapiens (Human)).